A 710-amino-acid polypeptide reads, in one-letter code: Ent-copalyl diphosphate synthase 1 (710 aa).

Residue lysine 145 participates in substrate binding. The Mg(2+) site is built by aspartate 277 and aspartate 279. The DXDD motif motif lies at 277 to 280; it reads DIDD. Residue lysine 364 coordinates substrate.

The protein belongs to the terpene synthase family. Tpsc subfamily. Mg(2+) serves as cofactor. As to expression, expressed in germinating seeds and leaves.

The catalysed reaction is (2E,6E,10E)-geranylgeranyl diphosphate = ent-copalyl diphosphate. It functions in the pathway plant hormone biosynthesis; gibberellin biosynthesis. It participates in secondary metabolite biosynthesis; terpenoid biosynthesis. In terms of biological role, involved in the biosynthesis of ent-kaurene diterpenoids natural products such as oridonin, miltiradiene, eriocalyxin B and nezukol, known to exhibit antitumor, anti-inflammatory and antibacterial activities, and in the production of gibberellins phytohormones. Catalyzes the conversion of (2E,6E,10E)-geranylgeranyl diphosphate (GGPP) to ent-copalyl diphosphate (ent-CPP). The sequence is that of Ent-copalyl diphosphate synthase 1 from Isodon eriocalyx (Plectranthus eriocalyx).